The sequence spans 284 residues: Lipoyl synthase (284 aa).

7 residues coordinate [4Fe-4S] cluster: C34, C39, C45, C60, C64, C67, and S272. In terms of domain architecture, Radical SAM core spans F46–K261.

Belongs to the radical SAM superfamily. Lipoyl synthase family. It depends on [4Fe-4S] cluster as a cofactor.

The protein localises to the cytoplasm. The enzyme catalyses [[Fe-S] cluster scaffold protein carrying a second [4Fe-4S](2+) cluster] + N(6)-octanoyl-L-lysyl-[protein] + 2 oxidized [2Fe-2S]-[ferredoxin] + 2 S-adenosyl-L-methionine + 4 H(+) = [[Fe-S] cluster scaffold protein] + N(6)-[(R)-dihydrolipoyl]-L-lysyl-[protein] + 4 Fe(3+) + 2 hydrogen sulfide + 2 5'-deoxyadenosine + 2 L-methionine + 2 reduced [2Fe-2S]-[ferredoxin]. It functions in the pathway protein modification; protein lipoylation via endogenous pathway; protein N(6)-(lipoyl)lysine from octanoyl-[acyl-carrier-protein]: step 2/2. Catalyzes the radical-mediated insertion of two sulfur atoms into the C-6 and C-8 positions of the octanoyl moiety bound to the lipoyl domains of lipoate-dependent enzymes, thereby converting the octanoylated domains into lipoylated derivatives. The chain is Lipoyl synthase from Caldanaerobacter subterraneus subsp. tengcongensis (strain DSM 15242 / JCM 11007 / NBRC 100824 / MB4) (Thermoanaerobacter tengcongensis).